Reading from the N-terminus, the 563-residue chain is Kelch repeat and BTB domain-containing protein 1 (563 aa).

The BTB domain occupies 21–88 (CDINIVINDE…IYGIPLSLTN (68 aa)). The region spanning 123–219 (CIDFYIYADK…SLLSPQVIKS (97 aa)) is the BACK domain. Kelch repeat units lie at residues 252–297 (IELI…VLDN), 298–346 (IIYM…ADDE), 347–395 (YIYC…MLNG), 397–441 (IYVI…VHAG), 442–492 (KIYI…SAHN), and 494–538 (LYVG…CEPI).

As to quaternary structure, interacts (via BTB domain) with host CUL3.

It is found in the host cytoplasm. Its function is as follows. Probable substrate-specific adapter of CUL3-containing E3 ubiquitin-protein ligases which mediate the ubiquitination and subsequent proteasomal degradation of host target proteins. In Cowpox virus (strain Brighton Red) (CPV), this protein is Kelch repeat and BTB domain-containing protein 1 (KBTB1).